We begin with the raw amino-acid sequence, 263 residues long: Probable ribosomal RNA small subunit methyltransferase A (263 aa).

5 residues coordinate S-adenosyl-L-methionine: L12, G37, E58, D83, and N100.

Belongs to the class I-like SAM-binding methyltransferase superfamily. rRNA adenine N(6)-methyltransferase family. RsmA subfamily.

It is found in the cytoplasm. Functionally, specifically dimethylates two adjacent adenosines in the loop of a conserved hairpin near the 3'-end of 16S rRNA in the 30S particle. May play a critical role in biogenesis of 30S subunits. This is Probable ribosomal RNA small subunit methyltransferase A from Methanococcus maripaludis (strain C7 / ATCC BAA-1331).